A 492-amino-acid polypeptide reads, in one-letter code: N-succinylglutamate 5-semialdehyde dehydrogenase (492 aa).

Residue 220–225 coordinates NAD(+); that stretch reads GSASTG. Residues E243 and C277 contribute to the active site.

The protein belongs to the aldehyde dehydrogenase family. AstD subfamily.

It catalyses the reaction N-succinyl-L-glutamate 5-semialdehyde + NAD(+) + H2O = N-succinyl-L-glutamate + NADH + 2 H(+). Its pathway is amino-acid degradation; L-arginine degradation via AST pathway; L-glutamate and succinate from L-arginine: step 4/5. Catalyzes the NAD-dependent reduction of succinylglutamate semialdehyde into succinylglutamate. The polypeptide is N-succinylglutamate 5-semialdehyde dehydrogenase (Salmonella heidelberg (strain SL476)).